The primary structure comprises 201 residues: 3-isopropylmalate dehydratase small subunit (201 aa).

Belongs to the LeuD family. LeuD type 1 subfamily. As to quaternary structure, heterodimer of LeuC and LeuD.

The enzyme catalyses (2R,3S)-3-isopropylmalate = (2S)-2-isopropylmalate. It participates in amino-acid biosynthesis; L-leucine biosynthesis; L-leucine from 3-methyl-2-oxobutanoate: step 2/4. In terms of biological role, catalyzes the isomerization between 2-isopropylmalate and 3-isopropylmalate, via the formation of 2-isopropylmaleate. The polypeptide is 3-isopropylmalate dehydratase small subunit (Escherichia coli O127:H6 (strain E2348/69 / EPEC)).